A 370-amino-acid chain; its full sequence is DNA primase large subunit PriL (370 aa).

Residues C268, C341, C350, and C354 each contribute to the [4Fe-4S] cluster site.

Belongs to the eukaryotic-type primase large subunit family. Heterodimer of a small subunit (PriS) and a large subunit (PriL). Requires [4Fe-4S] cluster as cofactor.

Regulatory subunit of DNA primase, an RNA polymerase that catalyzes the synthesis of short RNA molecules used as primers for DNA polymerase during DNA replication. Stabilizes and modulates the activity of the small subunit, increasing the rate of DNA synthesis, and conferring RNA synthesis capability. The DNA polymerase activity may enable DNA primase to also catalyze primer extension after primer synthesis. May also play a role in DNA repair. The polypeptide is DNA primase large subunit PriL (Archaeoglobus fulgidus (strain ATCC 49558 / DSM 4304 / JCM 9628 / NBRC 100126 / VC-16)).